The primary structure comprises 548 residues: T-complex protein 1 subunit theta (548 aa).

Ala-2 carries the post-translational modification N-acetylalanine. Ser-23 carries the post-translational modification Phosphoserine. Residue Tyr-30 is modified to Phosphotyrosine. Residues Tyr-47 and Gly-48 each coordinate ADP. Asp-99 is a binding site for Mg(2+). 4 residues coordinate ADP: Gly-100, Thr-101, Asn-102, and Phe-103. 3 residues coordinate ATP: Gly-100, Thr-101, and Asn-102. A Phosphoserine modification is found at Ser-162. Residues Met-169, Ser-170, and Lys-171 each contribute to the ADP site. ATP contacts are provided by Ser-170 and Lys-171. Residue Ser-213 is modified to Phosphoserine. Glycyl lysine isopeptide (Lys-Gly) (interchain with G-Cter in SUMO2) cross-links involve residues Lys-224, Lys-254, and Lys-260. Phosphoserine is present on residues Ser-269 and Ser-317. N6-acetyllysine is present on residues Lys-318 and Lys-400. Gly-412 provides a ligand contact to ADP. Gly-412 is a binding site for ATP. Lys-459 is covalently cross-linked (Glycyl lysine isopeptide (Lys-Gly) (interchain with G-Cter in SUMO1)). At Lys-466 the chain carries N6-acetyllysine. Asp-499 serves as a coordination point for ADP. Asp-499 and Lys-504 together coordinate ATP. Tyr-505 is modified (phosphotyrosine). Residues 529–548 (PAGGPKPPSGKKDWDDDQND) form a disordered region. Residue Lys-534 forms a Glycyl lysine isopeptide (Lys-Gly) (interchain with G-Cter in SUMO2) linkage. Ser-537 carries the post-translational modification Phosphoserine. A Glycyl lysine isopeptide (Lys-Gly) (interchain with G-Cter in SUMO2) cross-link involves residue Lys-539.

Belongs to the TCP-1 chaperonin family. In terms of assembly, component of the chaperonin-containing T-complex (TRiC), a hexadecamer composed of two identical back-to-back stacked rings enclosing a protein folding chamber. Each ring is made up of eight different subunits: TCP1/CCT1, CCT2, CCT3, CCT4, CCT5, CCT6A/CCT6, CCT7, CCT8. Interacts with PACRG. Interacts with DNAAF4. Interacts with synaptic plasticity regulator PANTS.

Its subcellular location is the cytoplasm. The protein localises to the cytoskeleton. It localises to the microtubule organizing center. It is found in the centrosome. The protein resides in the cilium basal body. It carries out the reaction ATP + H2O = ADP + phosphate + H(+). Functionally, component of the chaperonin-containing T-complex (TRiC), a molecular chaperone complex that assists the folding of actin, tubulin and other proteins upon ATP hydrolysis. The TRiC complex mediates the folding of WRAP53/TCAB1, thereby regulating telomere maintenance. As part of the TRiC complex may play a role in the assembly of BBSome, a complex involved in ciliogenesis regulating transports vesicles to the cilia. The sequence is that of T-complex protein 1 subunit theta (CCT8) from Homo sapiens (Human).